The following is a 765-amino-acid chain: Leucine-rich repeat and calponin homology domain-containing protein 2 (765 aa).

Disordered stretches follow at residues Met-1–Gly-39 and Leu-55–Thr-76. 9 LRR repeats span residues Ser-89–Leu-110, Asp-112–Phe-133, Pro-135–Leu-156, Met-158–Leu-179, Pro-180–Leu-201, Asp-203–Leu-224, Ser-226–Pro-248, Leu-249–Leu-269, and His-271–Lys-292. Residues Leu-316–Gln-401 form a disordered region. Over residues Ser-378–Ser-388 the composition is skewed to basic and acidic residues. Residues Ser-438–Asp-472 are a coiled coil. Disordered regions lie at residues Arg-498–Glu-552 and Lys-565–Ala-628. Residues Gln-503–Ser-512 show a composition bias toward basic and acidic residues. 2 stretches are compositionally biased toward polar residues: residues Ser-518 to Glu-529 and Asp-584 to Ser-595. The region spanning Leu-642–Pro-755 is the Calponin-homology (CH) domain.

In terms of biological role, may play a role in the organization of the cytoskeleton. The polypeptide is Leucine-rich repeat and calponin homology domain-containing protein 2 (LRCH2) (Homo sapiens (Human)).